We begin with the raw amino-acid sequence, 642 residues long: Chaperone protein HtpG (642 aa).

The segment at 1–348 (MSTKIEQLEF…AQDLSLNVSR (348 aa)) is a; substrate-binding. Residues 349-564 (EILQQDRQIR…AFSMSPALER (216 aa)) are b. The tract at residues 565-642 (MYRASGQPVP…MLANRLARTV (78 aa)) is c.

Belongs to the heat shock protein 90 family. In terms of assembly, homodimer.

It localises to the cytoplasm. Its function is as follows. Molecular chaperone. Has ATPase activity. The polypeptide is Chaperone protein HtpG (Rhodococcus jostii (strain RHA1)).